Here is a 266-residue protein sequence, read N- to C-terminus: Indole-3-glycerol phosphate synthase (266 aa).

This sequence belongs to the TrpC family.

It carries out the reaction 1-(2-carboxyphenylamino)-1-deoxy-D-ribulose 5-phosphate + H(+) = (1S,2R)-1-C-(indol-3-yl)glycerol 3-phosphate + CO2 + H2O. The protein operates within amino-acid biosynthesis; L-tryptophan biosynthesis; L-tryptophan from chorismate: step 4/5. The sequence is that of Indole-3-glycerol phosphate synthase from Herminiimonas arsenicoxydans.